Reading from the N-terminus, the 302-residue chain is Sulfate adenylyltransferase subunit 2 (302 aa).

Belongs to the PAPS reductase family. CysD subfamily. In terms of assembly, heterodimer composed of CysD, the smaller subunit, and CysN.

The catalysed reaction is sulfate + ATP + H(+) = adenosine 5'-phosphosulfate + diphosphate. The protein operates within sulfur metabolism; hydrogen sulfide biosynthesis; sulfite from sulfate: step 1/3. Functionally, with CysN forms the ATP sulfurylase (ATPS) that catalyzes the adenylation of sulfate producing adenosine 5'-phosphosulfate (APS) and diphosphate, the first enzymatic step in sulfur assimilation pathway. APS synthesis involves the formation of a high-energy phosphoric-sulfuric acid anhydride bond driven by GTP hydrolysis by CysN coupled to ATP hydrolysis by CysD. The sequence is that of Sulfate adenylyltransferase subunit 2 from Citrobacter koseri (strain ATCC BAA-895 / CDC 4225-83 / SGSC4696).